The primary structure comprises 184 residues: Succinate dehydrogenase cytochrome b560 subunit, mitochondrial (184 aa).

A helical membrane pass occupies residues 65-94 (LTWMLSGFHRISGCVMAGTLLVGGLGFAVL). The Mitochondrial intermembrane portion of the chain corresponds to 95–114 (PLDFTTFVEYIRGWNLPCAV). A helical transmembrane segment spans residues 115–139 (TAVFKYIIAFPIIFHTLNGIRFLGF). Position 129 (His129) interacts with heme. Residues 140–147 (DLAKGVDN) lie on the Mitochondrial matrix side of the membrane. The chain crosses the membrane as a helical span at residues 148–169 (IGQVYKSGWLVFGVSAVIALAI). Residues 170 to 172 (VIN) lie on the Mitochondrial intermembrane side of the membrane.

The protein belongs to the cytochrome b560 family. As to quaternary structure, component of complex II composed of four subunits: a flavoprotein (FP), iron-sulfur protein (IP), and a cytochrome b560 composed of two transmembrane proteins. Requires heme as cofactor.

The protein localises to the mitochondrion inner membrane. The protein operates within carbohydrate metabolism; tricarboxylic acid cycle. Its function is as follows. Membrane-anchoring subunit of succinate dehydrogenase (SDH) that is involved in complex II of the mitochondrial electron transport chain and is responsible for transferring electrons from succinate to ubiquinone (coenzyme Q). Mediates resistance to enteropathogenic E.coli infection. This Caenorhabditis briggsae protein is Succinate dehydrogenase cytochrome b560 subunit, mitochondrial (mev-1).